Reading from the N-terminus, the 65-residue chain is uncharacterized protein (65 aa).

The protein resides in the plastid. It is found in the chloroplast. This is an uncharacterized protein from Porphyra purpurea (Red seaweed).